The following is a 114-amino-acid chain: MNVLLGSVVIFATFVTLCNASCYFIPNEGVPGDSTRKCMDLKGNKHPINSEWQTDNCETCTCYETEISCCTLVSTPVGYDKDNCQRIFKKEDCKYIVVEKKDPKKTCSVSEWII.

Residues 1–20 (MNVLLGSVVIFATFVTLCNA) form the signal peptide. Intrachain disulfides connect cysteine 22-cysteine 70, cysteine 38-cysteine 62, cysteine 57-cysteine 93, cysteine 60-cysteine 69, and cysteine 84-cysteine 107.

Belongs to the beta-microseminoprotein family. Homodimer; Interacts with PI16. As to expression, strongly expressed in prostate, liver, kidney, breast and penis. Also expressed in pancreas, esophagus, stomach, deodenum, colon, trachea, lung, salivary glands and fallopian tube. PSP94 is expressed in lung and breast, whereas PSP57 is found in kidney and bladder.

It is found in the secreted. This is Beta-microseminoprotein (MSMB) from Homo sapiens (Human).